Here is a 323-residue protein sequence, read N- to C-terminus: Pantothenate kinase (323 aa).

Residue 101–108 (GSVAVGKS) coordinates ATP.

It belongs to the prokaryotic pantothenate kinase family.

Its subcellular location is the cytoplasm. The enzyme catalyses (R)-pantothenate + ATP = (R)-4'-phosphopantothenate + ADP + H(+). It functions in the pathway cofactor biosynthesis; coenzyme A biosynthesis; CoA from (R)-pantothenate: step 1/5. This Paenarthrobacter aurescens (strain TC1) protein is Pantothenate kinase.